The chain runs to 64 residues: uncharacterized protein (64 aa).

This is an uncharacterized protein from Bacillus subtilis (strain 168).